The primary structure comprises 518 residues: Ribonuclease Y (518 aa).

Residues 2-22 form a helical membrane-spanning segment; it reads GSIIISALLALVIGAVVGFFV. Residues 208–271 enclose the KH domain; it reads TVSVVNLPND…ETARIALDKL (64 aa). The HD domain occupies 334-427; that stretch reads VLKHSVEVAF…VAAADALSAA (94 aa).

This sequence belongs to the RNase Y family.

It localises to the cell membrane. Functionally, endoribonuclease that initiates mRNA decay. This chain is Ribonuclease Y, found in Geobacillus kaustophilus (strain HTA426).